A 376-amino-acid chain; its full sequence is Putative transmembrane protein 183BP (376 aa).

2 disordered regions span residues M1–K20 and A102–G127. The helical transmembrane segment at L300–V320 threads the bilayer.

Belongs to the TMEM183 family. Expressed in brain, lung, pancreas, thymus, intestine and blood. Not detected in heart, placenta, liver, muscle, kidney, spleen, prostate, testis, ovary and colon.

It is found in the membrane. This chain is Putative transmembrane protein 183BP, found in Homo sapiens (Human).